Consider the following 79-residue polypeptide: MNKKEFFTGAVKQVFIIPVKIYQYSISPLLPGACRYTPTCSEYCVQAIEKYGPLKGIWLGTKRICSCNPWGGSGYDPVP.

Belongs to the UPF0161 family.

The protein resides in the cell inner membrane. Its function is as follows. Could be involved in insertion of integral membrane proteins into the membrane. This Cytophaga hutchinsonii (strain ATCC 33406 / DSM 1761 / CIP 103989 / NBRC 15051 / NCIMB 9469 / D465) protein is Putative membrane protein insertion efficiency factor.